The chain runs to 395 residues: MVEYKPIKKVVSGNYAAAYAVLHARVQVVAAYPITPQTSIIEKIAEFIANGEADIQYIPVESEHSAMAACIGASATGARVFTATSAQGLALMHEMLHWAAGARLPIVMVDVNRAMAPPWSVWDDQTDSLSQRDTGWMQFYAENNQEVYDGVLMAFKVAETVNVPAMVVESAFILSHTYEIVNMIPQELVDEFLPPRKPLYSLADFENPIAVGALATPADYYEFRYKLARAHEEAKKVIKDVGREFGERFGRDYSEMIEKAYIDDADFVFMGMGSLMGTVKEAVELLRKQGYKVGYAKVRWFRPFPREELLEIAESVKGIAVLDRNFSFGQEGILFTEAKGALYNNGARPIMKNYIVGLGGRDFTVSDVKAIAEDMKKVIESGKLDREVEWYHLKR.

In terms of assembly, heterotetramer of one alpha, one beta, one delta and one gamma chain.

It carries out the reaction 3-methyl-2-oxobutanoate + 2 oxidized [2Fe-2S]-[ferredoxin] + CoA = 2-methylpropanoyl-CoA + 2 reduced [2Fe-2S]-[ferredoxin] + CO2 + H(+). The sequence is that of Ketoisovalerate oxidoreductase subunit VorA (vorA) from Pyrococcus abyssi (strain GE5 / Orsay).